Reading from the N-terminus, the 785-residue chain is MARTSSKTDSPKTGRLSGRFWKLLGASTDKDQARSMAQVHKAAEFDAKAADLDDEQLRKAARLLELDDLADSTDVPQFLAIAREAAKRTTGLTPFDVQLQGALRMLAGDVVEMATGEGKTLSGAIAAAGYALAGRNVHVITINDYLARRDAEWMGPLIEAMGLTIGWITADSTAAERRAAYRCDITYASVNEIGFDVLRDQLVTDVDDLVSPNPDVALIDEADSVLVDEALVPLVLAGTSHRETPRLELIRLVGELDENTDFATDNDSRNVHLTEAGARKIEAALGGIDLYSEEHVATTLTEVNVALHAHVLLQRDVHYIVRDDAVHLINSSRGRIATLQRWPDGLQAAVEAKEGIETTETGEVLDTITVQALINRYPRVCGMTGTALAAGEQLRQFYKLGVSPIPPNKPNIRQDETDRVYVTIAAKNDAVIEHIAEVHETGQPVLVGTRDVAESEEIHRRLVKAGVPAVVLNAKNDAEEAAVIAEAGKLGAVTVSTQMAGRGTDIRLGGSDEEDHDRVAELGGLHVIGTGRHHTERLDNQLRGRAGRQGDPGSSVFFSSWEDDLVMSHLEDNKLPLECDETGRVISPKAATLLEHAQRVAEGRLLDVHANTWRYNQLIAQQRAILVERRNTLLRTTTARDEIAELVPERYEEVKARLTAKDSETGEAKLETICRLIMLYHLDRAWADHLAFLADIRESIHLRALGRQNPLDEFHRMAVDAFASLAADAIEAAQQTFETAPSIEDEPGVDLSKLARPTSTWTYMVHDNPLADDTLSALSLPGVFR.

ATP contacts are provided by residues glutamine 98, 116–120 (GEGKT), and aspartate 505.

Belongs to the SecA family. In terms of assembly, monomer and homodimer. Part of the essential Sec protein translocation apparatus which comprises SecA, SecYEG and auxiliary proteins SecDF. Other proteins may also be involved.

It is found in the cell membrane. It localises to the cytoplasm. The catalysed reaction is ATP + H2O + cellular proteinSide 1 = ADP + phosphate + cellular proteinSide 2.. Its function is as follows. Part of the Sec protein translocase complex. Interacts with the SecYEG preprotein conducting channel. Has a central role in coupling the hydrolysis of ATP to the transfer of proteins into and across the cell membrane, serving as an ATP-driven molecular motor driving the stepwise translocation of polypeptide chains across the membrane. This is Protein translocase subunit SecA 3 from Mycolicibacterium vanbaalenii (strain DSM 7251 / JCM 13017 / BCRC 16820 / KCTC 9966 / NRRL B-24157 / PYR-1) (Mycobacterium vanbaalenii).